A 136-amino-acid chain; its full sequence is Small ribosomal subunit protein uS8 (136 aa).

It belongs to the universal ribosomal protein uS8 family. In terms of assembly, part of the 30S ribosomal subunit. Contacts proteins S5 and S12.

Functionally, one of the primary rRNA binding proteins, it binds directly to 16S rRNA central domain where it helps coordinate assembly of the platform of the 30S subunit. In Frankia alni (strain DSM 45986 / CECT 9034 / ACN14a), this protein is Small ribosomal subunit protein uS8.